A 476-amino-acid polypeptide reads, in one-letter code: Aspartyl/glutamyl-tRNA(Asn/Gln) amidotransferase subunit B (476 aa).

Belongs to the GatB/GatE family. GatB subfamily. As to quaternary structure, heterotrimer of A, B and C subunits.

It carries out the reaction L-glutamyl-tRNA(Gln) + L-glutamine + ATP + H2O = L-glutaminyl-tRNA(Gln) + L-glutamate + ADP + phosphate + H(+). The catalysed reaction is L-aspartyl-tRNA(Asn) + L-glutamine + ATP + H2O = L-asparaginyl-tRNA(Asn) + L-glutamate + ADP + phosphate + 2 H(+). In terms of biological role, allows the formation of correctly charged Asn-tRNA(Asn) or Gln-tRNA(Gln) through the transamidation of misacylated Asp-tRNA(Asn) or Glu-tRNA(Gln) in organisms which lack either or both of asparaginyl-tRNA or glutaminyl-tRNA synthetases. The reaction takes place in the presence of glutamine and ATP through an activated phospho-Asp-tRNA(Asn) or phospho-Glu-tRNA(Gln). The sequence is that of Aspartyl/glutamyl-tRNA(Asn/Gln) amidotransferase subunit B from Nitratidesulfovibrio vulgaris (strain ATCC 29579 / DSM 644 / CCUG 34227 / NCIMB 8303 / VKM B-1760 / Hildenborough) (Desulfovibrio vulgaris).